The primary structure comprises 814 residues: Ubiquitin carboxyl-terminal hydrolase 45 (814 aa).

Residues 1–14 (MRVKDPTKALPEKA) are compositionally biased toward basic and acidic residues. The disordered stretch occupies residues 1–28 (MRVKDPTKALPEKAKRSKRPTVPHDEDS). Positions 1 to 62 (MRVKDPTKAL…AIAENLWSVC (62 aa)) are interaction with ERCC1. Residues Ser28 and Ser29 each carry the phosphoserine modification. The segment at 36-153 (LTCQHVSHAI…AQIVDFLQKH (118 aa)) adopts a UBP-type zinc-finger fold. 12 residues coordinate Zn(2+): Cys38, His40, Cys62, Cys65, Cys85, Cys88, Cys93, His101, His105, His114, Cys127, and Cys130. Positions 190–813 (RGITNLGNTC…QAYLLFYERV (624 aa)) constitute a USP domain. Catalysis depends on Cys199, which acts as the Nucleophile. 2 disordered regions span residues 418–443 (IENIHQPRAAKKHSSSKDKSQLIHDR) and 479–533 (ESRL…PDGP). The segment covering 432 to 443 (SSKDKSQLIHDR) has biased composition (basic and acidic residues). A phosphoserine mark is found at Ser508 and Ser526. A compositionally biased stretch (polar residues) spans 515 to 527 (KQTGLFRSSSGSG). His746 acts as the Proton acceptor in catalysis.

It belongs to the peptidase C19 family. As to quaternary structure, interacts with ERCC1. The catalytically active form interacts with SPDL1. In terms of tissue distribution, widely expressed. High expression is detected in the cerebellum. In the eye, it is expressed at high levels in the optic nerve, sclera and retina, with relatively low levels in the choroid, lens and retinal pigment epithelium.

The protein resides in the photoreceptor inner segment. Its subcellular location is the cytoplasm. It localises to the nucleus. It catalyses the reaction Thiol-dependent hydrolysis of ester, thioester, amide, peptide and isopeptide bonds formed by the C-terminal Gly of ubiquitin (a 76-residue protein attached to proteins as an intracellular targeting signal).. Functionally, catalyzes the deubiquitination of SPDL1. Plays a role in the repair of UV-induced DNA damage via deubiquitination of ERCC1, promoting its recruitment to DNA damage sites. May be involved in the maintenance of photoreceptor function. May play a role in normal retinal development. Plays a role in cell migration. The protein is Ubiquitin carboxyl-terminal hydrolase 45 (USP45) of Homo sapiens (Human).